The following is an 83-amino-acid chain: Putative membrane protein insertion efficiency factor (83 aa).

Belongs to the UPF0161 family.

The protein localises to the cell membrane. Functionally, could be involved in insertion of integral membrane proteins into the membrane. This chain is Putative membrane protein insertion efficiency factor, found in Staphylococcus saprophyticus subsp. saprophyticus (strain ATCC 15305 / DSM 20229 / NCIMB 8711 / NCTC 7292 / S-41).